We begin with the raw amino-acid sequence, 368 residues long: DNA-directed RNA polymerase II subunit GRINL1A (368 aa).

The segment at 29-68 (KRQERLLRNEKFICKLPDKGKKIFDSFAKLKAAIAECEEV) is important for transcription repressor activity. 3 stretches are compositionally biased toward polar residues: residues 116 to 131 (SSVD…QNQG), 205 to 224 (GEQQ…LSSG), and 258 to 273 (QNDS…SPIS). 3 disordered regions span residues 116–186 (SSVD…DTSS), 203–227 (DQGE…GTEK), and 255–282 (PFRQ…RRDK). The segment at 227–298 (KKPHYMEVLE…TAARLLPLHH (72 aa)) is interaction with Pol II. Serine 270 bears the Phosphoserine mark. Positions 299–314 (MPTQLLSIEESLALQK) are important for transcription repressor activity. A coiled-coil region spans residues 301 to 335 (TQLLSIEESLALQKQQKQNYEEMQAKLAAQKLAER). The interaction with Pol II stretch occupies residues 315–340 (QQKQNYEEMQAKLAAQKLAERLNIKM). The tract at residues 339–368 (KMRSYNPEGESSGRYREVRDEDDDWSSDEF) is disordered. A compositionally biased stretch (acidic residues) spans 358–368 (DEDDDWSSDEF).

The protein belongs to the GRINL1 family. As to quaternary structure, component of the Pol II(G) complex, which contains the RNA polymerase II (Pol II) core complex subunits and POLR2M isoform 1. Pol II(G) appears to be an abundant form of Pol II. Dephosphorylated at Ser-270 by the PNUTS-PP1 complex, promoting RNA polymerase II transcription pause-release. As to expression, detected in adult an fetal brain. Detected in heart, kidney, skeletal muscle, small intestine, lung, prostate and testis.

It localises to the nucleus. In terms of biological role, appears to be a stable component of the Pol II(G) complex form of RNA polymerase II (Pol II). Pol II synthesizes mRNA precursors and many functional non-coding RNAs and is the central component of the basal RNA polymerase II transcription machinery. May play a role in the Mediator complex-dependent regulation of transcription activation. Acts as a negative regulator of transcriptional activation; this repression is relieved by the Mediator complex, which restores Pol II(G) activator-dependent transcription to a level equivalent to that of Pol II. In Homo sapiens (Human), this protein is DNA-directed RNA polymerase II subunit GRINL1A (POLR2M).